We begin with the raw amino-acid sequence, 129 residues long: Transcription antitermination protein NusB (129 aa).

The protein belongs to the NusB family.

Involved in transcription antitermination. Required for transcription of ribosomal RNA (rRNA) genes. Binds specifically to the boxA antiterminator sequence of the ribosomal RNA (rrn) operons. This Bacillus licheniformis (strain ATCC 14580 / DSM 13 / JCM 2505 / CCUG 7422 / NBRC 12200 / NCIMB 9375 / NCTC 10341 / NRRL NRS-1264 / Gibson 46) protein is Transcription antitermination protein NusB.